The sequence spans 545 residues: Acetyltransferase BOT5 (545 aa).

An N-terminal signal peptide occupies residues methionine 1 to alanine 19. N-linked (GlcNAc...) asparagine glycosylation is found at asparagine 70 and asparagine 198. Residue histidine 208 is the Proton acceptor of the active site. Residues asparagine 346 and asparagine 445 are each glycosylated (N-linked (GlcNAc...) asparagine). Residues glycine 466–arginine 493 form a disordered region.

Belongs to the plant acyltransferase family.

It participates in secondary metabolite biosynthesis. In terms of biological role, acetyltransferase; part of the gene cluster that mediates the biosynthesis of botrydial. Botrydial is necessary for colonization of plant tissue by the T4 strain. It is a strain-dependent virulence factor since highly aggressive strains like SAS56 or B05 still retain substantial virulence when botrydial synthesis is impaired, since they produce also botcinic acid. The first step of botrydial biosynthesis is performed by the sesquiterpene synthase BOT2 which catalyzes the cyclization of farnesyl diphosphate (FPP) to presilphiperfolan-8-beta-ol (PSP). The cytochrome P450 monooxygenase BOT4 then catalyzes the hydroxylation at C-4 to give a probotryane intermediate. Acetylation of the hydroxyl at C-4 is carried out by the acetyltransferase BOT5, followed by the combined action of the P450 monooxygenases BOT3 and BOT1, to yield finally the glycol, via the regio- and stereospecific hydroxylations at C-10 and C-15 of the probotryane intermediates, respectively. The cleavage of the C10-C15 bond of probotryane skeleton is an intriguing and chemically important reaction, which could be mediated by some of the monooxygenases or by a combination of them. It is possible that either BOT3 or BOT1 would oxidize either the 10- or the 15-hydroxy group to the hydroperoxide derivative, which would then undergo heterolytic fragmentation to give the dialdehyde botrydial. Finally, the dehydrogenase BOT7 might be involved in the conversion of botrydial to dihydrobotrydial. This is Acetyltransferase BOT5 from Botryotinia fuckeliana (Noble rot fungus).